Here is a 99-residue protein sequence, read N- to C-terminus: Malonate decarboxylase acyl carrier protein (99 aa).

An O-(phosphoribosyl dephospho-coenzyme A)serine modification is found at Ser25.

Belongs to the MdcC family. Covalently binds the prosthetic group of malonate decarboxylase.

The protein localises to the cytoplasm. In terms of biological role, subunit of malonate decarboxylase, it is an acyl carrier protein to which acetyl and malonyl thioester residues are bound via a 2'-(5''-phosphoribosyl)-3'-dephospho-CoA prosthetic group and turn over during the catalytic mechanism. The chain is Malonate decarboxylase acyl carrier protein from Pseudomonas putida (strain W619).